The sequence spans 389 residues: Sulfate adenylyltransferase (389 aa).

This sequence belongs to the sulfate adenylyltransferase family.

The enzyme catalyses sulfate + ATP + H(+) = adenosine 5'-phosphosulfate + diphosphate. It participates in sulfur metabolism; hydrogen sulfide biosynthesis; sulfite from sulfate: step 1/3. The sequence is that of Sulfate adenylyltransferase from Desulforamulus reducens (strain ATCC BAA-1160 / DSM 100696 / MI-1) (Desulfotomaculum reducens).